A 386-amino-acid chain; its full sequence is S-adenosylmethionine synthase (386 aa).

Position 16 (His-16) interacts with ATP. Asp-18 contributes to the Mg(2+) binding site. K(+) is bound at residue Glu-44. L-methionine-binding residues include Glu-57 and Gln-100. Positions 100-110 (QSRDITQGVDR) are flexible loop. ATP contacts are provided by residues 165-167 (DAK), Asp-240, 246-247 (RK), Ala-263, and Lys-267. Asp-240 lines the L-methionine pocket. Lys-271 is a binding site for L-methionine.

It belongs to the AdoMet synthase family. As to quaternary structure, homotetramer; dimer of dimers. Requires Mg(2+) as cofactor. K(+) serves as cofactor.

The protein localises to the cytoplasm. It catalyses the reaction L-methionine + ATP + H2O = S-adenosyl-L-methionine + phosphate + diphosphate. It participates in amino-acid biosynthesis; S-adenosyl-L-methionine biosynthesis; S-adenosyl-L-methionine from L-methionine: step 1/1. In terms of biological role, catalyzes the formation of S-adenosylmethionine (AdoMet) from methionine and ATP. The overall synthetic reaction is composed of two sequential steps, AdoMet formation and the subsequent tripolyphosphate hydrolysis which occurs prior to release of AdoMet from the enzyme. The sequence is that of S-adenosylmethionine synthase from Francisella tularensis subsp. tularensis (strain FSC 198).